We begin with the raw amino-acid sequence, 940 residues long: UvrABC system protein A (940 aa).

Residue 31–38 participates in ATP binding; the sequence is GLSGSGKS. A C4-type zinc finger spans residues 252–279; the sequence is CPHCGYSMQELEPRLFSFNNPAGACGTC. 2 consecutive ABC transporter domains span residues 309–586 and 606–936; these read WDQK…PDSL and RDKN…RFLK. 639–646 provides a ligand contact to ATP; that stretch reads GVSGSGKS. The C4-type zinc finger occupies 739–765; sequence CEACQGDGVIKVEMHFLPDVYVPCDVC.

This sequence belongs to the ABC transporter superfamily. UvrA family. Forms a heterotetramer with UvrB during the search for lesions.

Its subcellular location is the cytoplasm. The UvrABC repair system catalyzes the recognition and processing of DNA lesions. UvrA is an ATPase and a DNA-binding protein. A damage recognition complex composed of 2 UvrA and 2 UvrB subunits scans DNA for abnormalities. When the presence of a lesion has been verified by UvrB, the UvrA molecules dissociate. This Vibrio vulnificus (strain YJ016) protein is UvrABC system protein A.